Here is a 272-residue protein sequence, read N- to C-terminus: NADPH-dependent 7-cyano-7-deazaguanine reductase (272 aa).

Position 82–84 (82–84) interacts with substrate; it reads IES. 84-85 provides a ligand contact to NADPH; it reads SK. Catalysis depends on Cys178, which acts as the Thioimide intermediate. The active-site Proton donor is the Asp185. 217–218 contributes to the substrate binding site; the sequence is HE. 246 to 247 is an NADPH binding site; that stretch reads RG.

This sequence belongs to the GTP cyclohydrolase I family. QueF type 2 subfamily. Homodimer.

The protein localises to the cytoplasm. The enzyme catalyses 7-aminomethyl-7-carbaguanine + 2 NADP(+) = 7-cyano-7-deazaguanine + 2 NADPH + 3 H(+). Its pathway is tRNA modification; tRNA-queuosine biosynthesis. Its function is as follows. Catalyzes the NADPH-dependent reduction of 7-cyano-7-deazaguanine (preQ0) to 7-aminomethyl-7-deazaguanine (preQ1). The protein is NADPH-dependent 7-cyano-7-deazaguanine reductase of Stenotrophomonas maltophilia (strain R551-3).